The following is a 385-amino-acid chain: MSGSTFGLLFCVTNFGESHGPAIGCVIDGCPPGMALGEADIQPDLDRRRPGTSRHVTQRNEPDQVEILSGVYEGRTTGTPICLLIRNTDQRSKDYGNILDTFRPGHADYTYWRKYGLRDPRGGGRSSARMTAPMVAAGAVAKKWLREQHGITFTGWMSALGELPIPFEDESQIPLNPFYAPNAAVVPQLEAYMDALRKSGDSVGARIEVRARGVPAGLGEPLYDKLDADIAYAMMGINAVKGVEIGAGFASVAQRGTQHGDELTPAGFASNNAGGVLGGISTGQDLVVSIAIKPTSSIRSPKASIDRAGAPTVVETLGRHDPCVGIRATPIAEAMLALVVMDHALRQRAQCGDVQLPIPPLAAQAPRTETAPATPPLDAGDDIEA.

Residues 43 to 63 (PDLDRRRPGTSRHVTQRNEPD) form a disordered region. NADP(+) contacts are provided by arginine 48 and arginine 54. FMN-binding positions include 125–127 (RSS), 238–239 (NA), glycine 278, 293–297 (KPTSS), and arginine 319. Low complexity predominate over residues 363–372 (AQAPRTETAP). Residues 363–385 (AQAPRTETAPATPPLDAGDDIEA) form a disordered region.

Belongs to the chorismate synthase family. As to quaternary structure, homotetramer. FMNH2 is required as a cofactor.

The catalysed reaction is 5-O-(1-carboxyvinyl)-3-phosphoshikimate = chorismate + phosphate. It participates in metabolic intermediate biosynthesis; chorismate biosynthesis; chorismate from D-erythrose 4-phosphate and phosphoenolpyruvate: step 7/7. Functionally, catalyzes the anti-1,4-elimination of the C-3 phosphate and the C-6 proR hydrogen from 5-enolpyruvylshikimate-3-phosphate (EPSP) to yield chorismate, which is the branch point compound that serves as the starting substrate for the three terminal pathways of aromatic amino acid biosynthesis. This reaction introduces a second double bond into the aromatic ring system. This Leptothrix cholodnii (strain ATCC 51168 / LMG 8142 / SP-6) (Leptothrix discophora (strain SP-6)) protein is Chorismate synthase.